A 652-amino-acid polypeptide reads, in one-letter code: ATP-dependent zinc metalloprotease FtsH (652 aa).

Topologically, residues 1 to 11 (MKKQNNGLIKN) are cytoplasmic. The chain crosses the membrane as a helical span at residues 12-32 (PFLWLLFIFFLVTGFQYFYSG). The Extracellular portion of the chain corresponds to 33–131 (NNSGGSQQIN…EVTVKHESSS (99 aa)). A helical membrane pass occupies residues 132-152 (GIWINLLVSIVPFGILFFFLF). Topologically, residues 153-652 (SMMGNMGGGN…EVKSKMNDEK (500 aa)) are cytoplasmic. Residue 227–234 (GPPGTGKT) coordinates ATP. Residue His-449 coordinates Zn(2+). Residue Glu-450 is part of the active site. The Zn(2+) site is built by His-453 and Asp-525. The tract at residues 628-652 (MPEAVEEESHALSYDEVKSKMNDEK) is disordered. Residues 634–652 (EESHALSYDEVKSKMNDEK) are compositionally biased toward basic and acidic residues.

The protein in the central section; belongs to the AAA ATPase family. This sequence in the C-terminal section; belongs to the peptidase M41 family. In terms of assembly, homohexamer. Requires Zn(2+) as cofactor.

The protein localises to the cell membrane. Functionally, acts as a processive, ATP-dependent zinc metallopeptidase for both cytoplasmic and membrane proteins. Plays a role in the quality control of integral membrane proteins. This is ATP-dependent zinc metalloprotease FtsH from Streptococcus pneumoniae serotype 4 (strain ATCC BAA-334 / TIGR4).